A 913-amino-acid polypeptide reads, in one-letter code: DNA repair endonuclease XPF (913 aa).

The helicase-like stretch occupies residues 1–454; the sequence is MDRGISAVRK…EVWVNLRKGD (454 aa). Leucine-zipper stretches follow at residues 233–254 and 270–298; these read LNACLKELKCHNPSLEVEDLSL and LDPLWHQLGAKTKSLVQDLKILRTLLQYL. An N6-acetyllysine modification is found at lysine 289. The segment covering 453–476 has biased composition (basic and acidic residues); it reads GDGPKRTMKSDKRPKDTKNKERAS. Disordered regions lie at residues 453–525 and 638–677; these read GDGP…CGGE and VVPEEREGRDETNLDLARGTVSTDAPADTRKAGGQEHNGT. The Nuclear localization signal motif lies at 483 to 488; the sequence is KRKKRE. The segment covering 500–509 has biased composition (acidic residues); it reads EPPEEGAAEE. Serine 518 is modified (phosphoserine). The span at 638 to 649 shows a compositional bias: basic and acidic residues; that stretch reads VVPEEREGRDET. The interval 655–810 is nuclease; that stretch reads RGTVSTDAPA…PSPHATAELF (156 aa). An ERCC4 domain is found at 680-760; the sequence is SIVVDMREFR…RPVLLIEFDA (81 aa). Positions 834-902 are hhH2, dimerization with ERCC1; sequence TLPESDKYNP…QLYDFLHTAY (69 aa).

It belongs to the XPF family. As to quaternary structure, heterodimer composed of ERCC1 and ERCC4/XPF. Interacts with SLX4/BTBD12; this interaction is direct and links the ERCC1-ERCC4/XPF complex to SLX4, which may coordinate the action of the structure-specific endonuclease during DNA repair. The cofactor is Mg(2+).

The protein localises to the nucleus. It is found in the chromosome. In terms of biological role, catalytic component of a structure-specific DNA repair endonuclease responsible for the 5-prime incision during DNA repair, and which is essential for nucleotide excision repair (NER) and interstrand cross-link (ICL) repair. The polypeptide is DNA repair endonuclease XPF (Cricetulus griseus (Chinese hamster)).